The following is a 239-amino-acid chain: Tetraspanin-9 (239 aa).

The next 3 membrane-spanning stretches (helical) occupy residues 14-34, 56-76, and 86-106; these read FLFNLIFWLCGCGLLGVGIWL, LVIAIGTIVMVTGFLGCLGAI, and FFIVLLIILLAELILIILFFV. Asn-180 and Asn-181 each carry an N-linked (GlcNAc...) asparagine glycan. The helical transmembrane segment at 204-224 threads the bilayer; the sequence is VLGTVGMCLLITQILGMAFSM.

The protein belongs to the tetraspanin (TM4SF) family. As to quaternary structure, found in a complex with GP6. Post-translationally, glycosylated.

It localises to the membrane. The polypeptide is Tetraspanin-9 (TSPAN9) (Ovis aries (Sheep)).